Here is a 276-residue protein sequence, read N- to C-terminus: NADH-cytochrome b5 reductase 2 (276 aa).

The FAD-binding FR-type domain maps to 15-127; it reads EAKYPLPLIE…RGPRGRLFYH (113 aa). An N6-acetyllysine modification is found at Lys-17. Phosphotyrosine is present on Tyr-18. Residues 107–137 and 146–181 each bind FAD; these read ENMK…IRPD and LADH…RMSL.

The protein belongs to the flavoprotein pyridine nucleotide cytochrome reductase family. It depends on FAD as a cofactor. In terms of tissue distribution, restricted expression.

It carries out the reaction 2 Fe(III)-[cytochrome b5] + NADH = 2 Fe(II)-[cytochrome b5] + NAD(+) + H(+). Its function is as follows. NADH-cytochrome b5 reductases are involved in desaturation and elongation of fatty acids, cholesterol biosynthesis, drug metabolism, and, in erythrocyte, methemoglobin reduction. Responsible for NADH-dependent lucigenin chemiluminescence in spermatozoa by reducing both lucigenin and 2-[4-iodophenyl]-3-[4-nitrophenyl]-5-[2,4-disulfophenyl]-2H tetrazolium monosodium salt (WST-1). This Homo sapiens (Human) protein is NADH-cytochrome b5 reductase 2.